An 851-amino-acid chain; its full sequence is DNA mismatch repair protein MutS (851 aa).

602–609 (GPNMSGKS) is an ATP binding site.

Belongs to the DNA mismatch repair MutS family.

In terms of biological role, this protein is involved in the repair of mismatches in DNA. It is possible that it carries out the mismatch recognition step. This protein has a weak ATPase activity. This is DNA mismatch repair protein MutS from Streptococcus pyogenes serotype M28 (strain MGAS6180).